The sequence spans 91 residues: Cell division protein FtsB (91 aa).

Topologically, residues 1 to 3 are cytoplasmic; it reads MRW. A helical membrane pass occupies residues 4–21; that stretch reads PLIVLAVLVIVLQYPLWL. The Periplasmic portion of the chain corresponds to 22–91; the sequence is GKGGWLRVWD…EIFVHTPRKP (70 aa). The stretch at 28 to 74 forms a coiled coil; the sequence is RVWDVDRQLQAQRETNQRLEQRNAGLEAEVRDLKSGNEAVEERARFE.

Belongs to the FtsB family. In terms of assembly, part of a complex composed of FtsB, FtsL and FtsQ.

It is found in the cell inner membrane. In terms of biological role, essential cell division protein. May link together the upstream cell division proteins, which are predominantly cytoplasmic, with the downstream cell division proteins, which are predominantly periplasmic. The sequence is that of Cell division protein FtsB from Aromatoleum aromaticum (strain DSM 19018 / LMG 30748 / EbN1) (Azoarcus sp. (strain EbN1)).